The sequence spans 1196 residues: Contactin rig-6 (1196 aa).

An N-terminal signal peptide occupies residues 1–19 (MMMLIRCISIFLLFGFVNA). Asparagine 100 and asparagine 195 each carry an N-linked (GlcNAc...) asparagine glycan. 2 consecutive Ig-like C2-type domains span residues 144 to 225 (PQIS…ARNS) and 232 to 319 (PPIL…CSLS). 2 disulfides stabilise this stretch: cysteine 169–cysteine 220 and cysteine 263–cysteine 316. N-linked (GlcNAc...) asparagine glycosylation is present at asparagine 343. Ig-like C2-type domains are found at residues 355 to 438 (PQIF…VKLR), 441 to 533 (PSIL…ALLT), 539 to 626 (PVFP…VQLI), and 631 to 730 (PSIK…EFVT). A disulfide bridge connects residues cysteine 372 and cysteine 420. Asparagine 457 carries an N-linked (GlcNAc...) asparagine glycan. Disulfide bonds link cysteine 462/cysteine 517 and cysteine 562/cysteine 610. The N-linked (GlcNAc...) asparagine glycan is linked to asparagine 644. Residues cysteine 653 and cysteine 718 are joined by a disulfide bond. 4 Fibronectin type-III domains span residues 736 to 844 (SPIA…TAPG), 849 to 961 (TIDN…SHGE), 963 to 1057 (KKVS…TKQH), and 1064 to 1168 (LIGK…LGSP). 8 N-linked (GlcNAc...) asparagine glycosylation sites follow: asparagine 895, asparagine 925, asparagine 945, asparagine 974, asparagine 979, asparagine 986, asparagine 1002, and asparagine 1092. Residues 1174–1194 (TTGSSDVPIPSLLLLLLLLLW) traverse the membrane as a helical segment. Residue serine 1177 is the site of GPI-anchor amidated serine attachment. Positions 1178-1196 (SDVPIPSLLLLLLLLLWRL) are cleaved as a propeptide — removed in mature form.

It belongs to the immunoglobulin superfamily. Contactin family. Interacts with sax-7; the interaction establishes synaptic connections between neurons. In terms of tissue distribution, expressed in neurons including the I1 and I3 pharyngeal interneurons, NSM and VNC motor neurons, HSN and CAN neurons, the ALM and PLM touch receptor neurons and other unidentified head neurons. Expressed in AVG interneurons. Also expressed in somatic muscles, the excretory canal, the excretory cell and the hypodermis.

The protein resides in the cell membrane. It localises to the perikaryon. The protein localises to the cell projection. It is found in the axon. Its subcellular location is the synapse. The protein resides in the cytoplasm. Functionally, probable cell adhesion protein involved in patterning of the nervous system, playing a role in ALM and PLM touch receptor axon growth and VNC axon navigation. By associating with the transmembrane protein sax-7, mediates axonal interactions to establish synaptic connections between the AVG interneuron and the two PHC sensory neurons. Also required for non-neuronal cell migration in the excretory canal, regulating excretory canal elongation and excretory cell morphogenesis. Plays a role in regulating male mating behavior. This Caenorhabditis elegans protein is Contactin rig-6.